The primary structure comprises 61 residues: Photosystem II reaction center protein K (61 aa).

Positions 1-24 are excised as a propeptide; sequence MLNIFSLICICLHSTLYSSSFFLA. The helical transmembrane segment at 36 to 56 threads the bilayer; sequence IVDFMPVIPLLFFLLAFVWQA.

It belongs to the PsbK family. As to quaternary structure, PSII is composed of 1 copy each of membrane proteins PsbA, PsbB, PsbC, PsbD, PsbE, PsbF, PsbH, PsbI, PsbJ, PsbK, PsbL, PsbM, PsbT, PsbX, PsbY, PsbZ, Psb30/Ycf12, at least 3 peripheral proteins of the oxygen-evolving complex and a large number of cofactors. It forms dimeric complexes.

The protein localises to the plastid. The protein resides in the chloroplast thylakoid membrane. Functionally, one of the components of the core complex of photosystem II (PSII). PSII is a light-driven water:plastoquinone oxidoreductase that uses light energy to abstract electrons from H(2)O, generating O(2) and a proton gradient subsequently used for ATP formation. It consists of a core antenna complex that captures photons, and an electron transfer chain that converts photonic excitation into a charge separation. This Eucalyptus globulus subsp. globulus (Tasmanian blue gum) protein is Photosystem II reaction center protein K.